We begin with the raw amino-acid sequence, 394 residues long: MLLEAPVYKEIFGAVTIHEVQKVIKMDTETEDVPVYTISNIPREKIYNLLGKMAIIVPMKNEKLHLVDGVLKAIPHKCPIIIVSNSKREGPNRYKLEVDLVRHFYNLTHSKVIMIHQKDPGLAKAFKEVGYTDILDGKGKVRSGKGEGMIIGMLLAKAIGAEYIGFVDADNYIPGSVNEYVKDYAAGFLMSESDYTMVRLHWRHKPKVTKGTLYFKKWGRVSEITNHYLNLLISEHTAFETTIMVTGNAGEHAMTMKLAEIMPFSTGYSVEPYEIVYLLERFGKWENVDEFKEVFDQGIEIFQIETLNPHFHEDKGQEHVKEMLLLSLATIYHSKLATNSLKKKILNDLREHKILKENEEPPKPLVMRPIKEIPIKEWMEIVEDNSETLLRFEL.

The protein belongs to the glycosyltransferase 2 family.

It localises to the cytoplasm. The enzyme catalyses (2R)-3-phosphoglycerate + GDP-alpha-D-mannose = 2-O-(alpha-D-mannosyl)-3-phosphoglycerate + GDP + H(+). Its pathway is carbohydrate biosynthesis; 2-(alpha-D-mannosyl)-D-glycerate biosynthesis; 2-(alpha-D-mannosyl)-D-glycerate from GDP-alpha-D-mannose (MPG route): step 1/2. Its function is as follows. Transfers a mannosyl group from GDP-mannose to phosphoglycerate to form mannosyl-3-phosphoglycerate (MPG). This Pyrococcus abyssi (strain GE5 / Orsay) protein is Mannosyl-3-phosphoglycerate synthase (mngA).